The primary structure comprises 136 residues: Large ribosomal subunit protein uL16 (136 aa).

This sequence belongs to the universal ribosomal protein uL16 family. In terms of assembly, part of the 50S ribosomal subunit.

Binds 23S rRNA and is also seen to make contacts with the A and possibly P site tRNAs. The protein is Large ribosomal subunit protein uL16 of Shewanella woodyi (strain ATCC 51908 / MS32).